Reading from the N-terminus, the 65-residue chain is Large ribosomal subunit protein bL35 (65 aa).

This sequence belongs to the bacterial ribosomal protein bL35 family.

The protein is Large ribosomal subunit protein bL35 of Chlorobium phaeovibrioides (strain DSM 265 / 1930) (Prosthecochloris vibrioformis (strain DSM 265)).